Here is a 365-residue protein sequence, read N- to C-terminus: Caffeic acid 3-O-methyltransferase 1 (365 aa).

Substrate is bound at residue 130 to 136 (MNQDKVL). The segment at 162–180 (AFEYHGTDPRFNKVFNKGM) is substrate binding. The S-adenosyl-L-methionine site is built by Gly208, Asp231, Asp251, Met252, and Lys265. The active-site Proton acceptor is the His269.

The protein belongs to the class I-like SAM-binding methyltransferase superfamily. Cation-independent O-methyltransferase family. COMT subfamily. Homodimer. In terms of processing, the N-terminus is blocked. As to expression, xylem.

It carries out the reaction (E)-caffeate + S-adenosyl-L-methionine = (E)-ferulate + S-adenosyl-L-homocysteine + H(+). Its pathway is aromatic compound metabolism; phenylpropanoid biosynthesis. Catalyzes the conversion of caffeic acid to ferulic acid and of 5-hydroxyferulic acid to sinapic acid. The resulting products may subsequently be converted to the corresponding alcohols that are incorporated into lignins. The chain is Caffeic acid 3-O-methyltransferase 1 (OMT1) from Populus tremuloides (Quaking aspen).